A 367-amino-acid chain; its full sequence is 3-isopropylmalate dehydrogenase (367 aa).

Position 80-93 (80-93 (GKEWTHLPADEQPE)) interacts with NAD(+). Residues Arg-101, Arg-111, Arg-140, and Asp-230 each coordinate substrate. Mg(2+) contacts are provided by Asp-230, Asp-254, and Asp-258. An NAD(+)-binding site is contributed by 288 to 300 (GSAPDLKGKNIAN).

Belongs to the isocitrate and isopropylmalate dehydrogenases family. LeuB type 1 subfamily. As to quaternary structure, homodimer. Requires Mg(2+) as cofactor. Mn(2+) is required as a cofactor.

It is found in the cytoplasm. It catalyses the reaction (2R,3S)-3-isopropylmalate + NAD(+) = 4-methyl-2-oxopentanoate + CO2 + NADH. It participates in amino-acid biosynthesis; L-leucine biosynthesis; L-leucine from 3-methyl-2-oxobutanoate: step 3/4. In terms of biological role, catalyzes the oxidation of 3-carboxy-2-hydroxy-4-methylpentanoate (3-isopropylmalate) to 3-carboxy-4-methyl-2-oxopentanoate. The product decarboxylates to 4-methyl-2 oxopentanoate. The sequence is that of 3-isopropylmalate dehydrogenase (leuB) from Buchnera aphidicola subsp. Cinara cedri (strain Cc).